We begin with the raw amino-acid sequence, 242 residues long: 3-deoxy-manno-octulosonate cytidylyltransferase (242 aa).

Belongs to the KdsB family.

It localises to the cytoplasm. The catalysed reaction is 3-deoxy-alpha-D-manno-oct-2-ulosonate + CTP = CMP-3-deoxy-beta-D-manno-octulosonate + diphosphate. It participates in nucleotide-sugar biosynthesis; CMP-3-deoxy-D-manno-octulosonate biosynthesis; CMP-3-deoxy-D-manno-octulosonate from 3-deoxy-D-manno-octulosonate and CTP: step 1/1. Its pathway is bacterial outer membrane biogenesis; lipopolysaccharide biosynthesis. Functionally, activates KDO (a required 8-carbon sugar) for incorporation into bacterial lipopolysaccharide in Gram-negative bacteria. In Anaeromyxobacter dehalogenans (strain 2CP-1 / ATCC BAA-258), this protein is 3-deoxy-manno-octulosonate cytidylyltransferase.